Reading from the N-terminus, the 2324-residue chain is Acetyl-CoA carboxylase (2324 aa).

Position 1 is an N-acetylmethionine (Met-1). The segment at 1–34 (MEESSQPAKPLEMNPHSRFIIGSVSEDNSEDETS) is disordered. Phosphoserine is present on residues Ser-78 and Ser-80. The 502-residue stretch at 117–618 (VIEKVLIANN…DTGWLDRLIA (502 aa)) folds into the Biotin carboxylation domain. The 192-residue stretch at 275–466 (QKRILNVPQE…LPAAQLQIAM (192 aa)) folds into the ATP-grasp domain. 315 to 320 (GGGGKG) contacts ATP. Mn(2+) is bound by residues Glu-424, Glu-437, and Asn-439. The active site involves Arg-441. The region spanning 745-819 (FEKENDPSIL…DPGCVIAKLQ (75 aa)) is the Biotinyl-binding domain. Lys-786 bears the N6-biotinyllysine mark. Ser-1193 carries the post-translational modification Phosphoserine. Residues 1553 to 1891 (PYVTKDLLQS…SVYSPVPILK (339 aa)) form the CoA carboxyltransferase N-terminal domain. The segment at 1553–2211 (PYVTKDLLQS…EDVVKKKIHD (659 aa)) is carboxyltransferase. The CoA site is built by Arg-1800, Lys-2104, and Arg-2106. In terms of domain architecture, CoA carboxyltransferase C-terminal spans 1895–2211 (PIDRTIDFVP…EDVVKKKIHD (317 aa)).

Biotin is required as a cofactor. It depends on Mn(2+) as a cofactor.

The protein resides in the cytoplasm. The enzyme catalyses hydrogencarbonate + acetyl-CoA + ATP = malonyl-CoA + ADP + phosphate + H(+). It catalyses the reaction N(6)-biotinyl-L-lysyl-[protein] + hydrogencarbonate + ATP = N(6)-carboxybiotinyl-L-lysyl-[protein] + ADP + phosphate + H(+). It participates in lipid metabolism; malonyl-CoA biosynthesis; malonyl-CoA from acetyl-CoA: step 1/1. By phosphorylation. In terms of biological role, catalyzes the rate-limiting reaction in the biogenesis of long-chain fatty acids. Carries out three functions: biotin carboxyl carrier protein, biotin carboxylase and carboxyltransferase. This Gallus gallus (Chicken) protein is Acetyl-CoA carboxylase (ACAC).